Here is a 229-residue protein sequence, read N- to C-terminus: LexA repressor (229 aa).

Residues 28 to 48 constitute a DNA-binding region (H-T-H motif); sequence IREIGEALDIRSTNGVNDHLK. Catalysis depends on for autocatalytic cleavage activity residues serine 147 and lysine 184.

Belongs to the peptidase S24 family. As to quaternary structure, homodimer.

The enzyme catalyses Hydrolysis of Ala-|-Gly bond in repressor LexA.. Represses a number of genes involved in the response to DNA damage (SOS response), including recA and lexA. In the presence of single-stranded DNA, RecA interacts with LexA causing an autocatalytic cleavage which disrupts the DNA-binding part of LexA, leading to derepression of the SOS regulon and eventually DNA repair. In Anaeromyxobacter dehalogenans (strain 2CP-C), this protein is LexA repressor.